Reading from the N-terminus, the 362-residue chain is MKLKLVAVAVTSLLAAGVVNAAEVYNKDGNKLDLYGKVHAQHYFSDDNGSDGDKTYARLGFKGETQINDQLTGFGQWEYEFKGNRTESQGADKDKTRLAFAGLKFADYGSFDYGRNYGVAYDIGAWTDVLPEFGGDTWTQTDVFMTGRTTGVATYRNTDFFGLVEGLNFAAQYQGKNDRDGAYESNGDGFGLSATYEYEGFGVGAAYAKSDRTNNQVKAASNLNAAGKNAEVWAAGLKYDANNIYLATTYSETLNMTTFGEDAAGDAFIANKTQNFEAVAQYQFDFGLRPSIAYLKSKGKNLGTYGDQDLVEYIDVGATYYFNKNMSTFVDYKINLLDDSDFTKAAKVSTDNIVAVGLNYQF.

A signal peptide spans 1 to 21; it reads MKLKLVAVAVTSLLAAGVVNA.

It belongs to the Gram-negative porin family. Homotrimer.

The protein resides in the cell outer membrane. Its function is as follows. Forms pores that allow passive diffusion of small molecules across the outer membrane. The polypeptide is Outer membrane porin protein OmpD (ompD) (Salmonella choleraesuis (strain SC-B67)).